The sequence spans 422 residues: Exodeoxyribonuclease 7 large subunit (422 aa).

It belongs to the XseA family. Heterooligomer composed of large and small subunits.

The protein localises to the cytoplasm. It carries out the reaction Exonucleolytic cleavage in either 5'- to 3'- or 3'- to 5'-direction to yield nucleoside 5'-phosphates.. Functionally, bidirectionally degrades single-stranded DNA into large acid-insoluble oligonucleotides, which are then degraded further into small acid-soluble oligonucleotides. This chain is Exodeoxyribonuclease 7 large subunit, found in Leptospira interrogans serogroup Icterohaemorrhagiae serovar copenhageni (strain Fiocruz L1-130).